The following is a 99-amino-acid chain: Aspartyl/glutamyl-tRNA(Asn/Gln) amidotransferase subunit C (99 aa).

Belongs to the GatC family. In terms of assembly, heterotrimer of A, B and C subunits.

The catalysed reaction is L-glutamyl-tRNA(Gln) + L-glutamine + ATP + H2O = L-glutaminyl-tRNA(Gln) + L-glutamate + ADP + phosphate + H(+). It carries out the reaction L-aspartyl-tRNA(Asn) + L-glutamine + ATP + H2O = L-asparaginyl-tRNA(Asn) + L-glutamate + ADP + phosphate + 2 H(+). Functionally, allows the formation of correctly charged Asn-tRNA(Asn) or Gln-tRNA(Gln) through the transamidation of misacylated Asp-tRNA(Asn) or Glu-tRNA(Gln) in organisms which lack either or both of asparaginyl-tRNA or glutaminyl-tRNA synthetases. The reaction takes place in the presence of glutamine and ATP through an activated phospho-Asp-tRNA(Asn) or phospho-Glu-tRNA(Gln). This chain is Aspartyl/glutamyl-tRNA(Asn/Gln) amidotransferase subunit C, found in Bifidobacterium longum (strain NCC 2705).